The primary structure comprises 412 residues: Sexual development regulator umv3 (412 aa).

The segment at 1-197 (MSAQDDIDTG…PPLLSDLPRH (197 aa)) is disordered. Composition is skewed to polar residues over residues 73 to 93 (RANT…SASS) and 149 to 170 (RQSA…PGST). The span at 171–181 (ENERVRMHDQR) shows a compositional bias: basic and acidic residues. Residues 195–388 (PRHSTDNKTY…ARQGIQVPVR (194 aa)) enclose the Velvet domain.

This sequence belongs to the velvet family. VelC subfamily.

Its subcellular location is the nucleus. Its function is as follows. Velvet-domain-containing protein not required for disease or sexual development on seedlings. The polypeptide is Sexual development regulator umv3 (Mycosarcoma maydis (Corn smut fungus)).